Consider the following 274-residue polypeptide: Diaminopimelate epimerase (274 aa).

Substrate-binding residues include asparagine 11, glutamine 44, and asparagine 64. Catalysis depends on cysteine 73, which acts as the Proton donor. Residues 74–75 (GN), asparagine 157, asparagine 190, and 208–209 (ER) contribute to the substrate site. The active-site Proton acceptor is the cysteine 217. 218-219 (GS) serves as a coordination point for substrate.

It belongs to the diaminopimelate epimerase family. As to quaternary structure, homodimer.

It localises to the cytoplasm. It carries out the reaction (2S,6S)-2,6-diaminopimelate = meso-2,6-diaminopimelate. It participates in amino-acid biosynthesis; L-lysine biosynthesis via DAP pathway; DL-2,6-diaminopimelate from LL-2,6-diaminopimelate: step 1/1. In terms of biological role, catalyzes the stereoinversion of LL-2,6-diaminopimelate (L,L-DAP) to meso-diaminopimelate (meso-DAP), a precursor of L-lysine and an essential component of the bacterial peptidoglycan. The polypeptide is Diaminopimelate epimerase (Histophilus somni (strain 2336) (Haemophilus somnus)).